A 275-amino-acid polypeptide reads, in one-letter code: NH(3)-dependent NAD(+) synthetase (275 aa).

Residue 50–57 (GISGGVDS) participates in ATP binding. D56 contacts Mg(2+). R147 is a deamido-NAD(+) binding site. T167 is a binding site for ATP. E172 is a Mg(2+) binding site. 2 residues coordinate deamido-NAD(+): K180 and D187. Residues K196 and T218 each contribute to the ATP site. Residue 267–268 (HK) coordinates deamido-NAD(+).

This sequence belongs to the NAD synthetase family. Homodimer.

It catalyses the reaction deamido-NAD(+) + NH4(+) + ATP = AMP + diphosphate + NAD(+) + H(+). The protein operates within cofactor biosynthesis; NAD(+) biosynthesis; NAD(+) from deamido-NAD(+) (ammonia route): step 1/1. Its function is as follows. Catalyzes the ATP-dependent amidation of deamido-NAD to form NAD. Uses ammonia as a nitrogen source. The protein is NH(3)-dependent NAD(+) synthetase of Pseudomonas savastanoi pv. phaseolicola (strain 1448A / Race 6) (Pseudomonas syringae pv. phaseolicola (strain 1448A / Race 6)).